The primary structure comprises 157 residues: Transcription inhibitor protein Gfh1 (157 aa).

Positions 1–74 (MAREVKLTKA…LEDVLSRAVI (74 aa)) form a coiled coil.

This sequence belongs to the GreA/GreB family. In terms of assembly, interacts with RNAP.

Functionally, inhibits all catalytic activities of RNA polymerase (RNAP) by partially occluding its substrate-binding site and preventing NTP binding. This Thermus aquaticus protein is Transcription inhibitor protein Gfh1 (gfh1).